We begin with the raw amino-acid sequence, 475 residues long: Ribulose bisphosphate carboxylase large chain (475 aa).

Substrate-binding residues include N123 and T173. Catalysis depends on K175, which acts as the Proton acceptor. K177 is a substrate binding site. Residues K201, D203, and E204 each contribute to the Mg(2+) site. N6-carboxylysine is present on K201. The Proton acceptor role is filled by H294. Positions 295, 327, and 379 each coordinate substrate.

Belongs to the RuBisCO large chain family. Type I subfamily. As to quaternary structure, heterohexadecamer of 8 large chains and 8 small chains; disulfide-linked. The disulfide link is formed within the large subunit homodimers. Interacts with assembly factor Raf1 which helps form the holoenzyme, most interaction (and folding) occurs in the cytoplasm. Mg(2+) serves as cofactor. The disulfide bond which can form in the large chain dimeric partners within the hexadecamer appears to be associated with oxidative stress and protein turnover.

Its subcellular location is the carboxysome. It localises to the cytoplasm. The enzyme catalyses 2 (2R)-3-phosphoglycerate + 2 H(+) = D-ribulose 1,5-bisphosphate + CO2 + H2O. It catalyses the reaction D-ribulose 1,5-bisphosphate + O2 = 2-phosphoglycolate + (2R)-3-phosphoglycerate + 2 H(+). RuBisCO catalyzes two reactions: the carboxylation of D-ribulose 1,5-bisphosphate, the primary event in carbon dioxide fixation, as well as the oxidative fragmentation of the pentose substrate in the photorespiration process. Both reactions occur simultaneously and in competition at the same active site. The polypeptide is Ribulose bisphosphate carboxylase large chain (Thermosynechococcus vestitus (strain NIES-2133 / IAM M-273 / BP-1)).